We begin with the raw amino-acid sequence, 512 residues long: ATP synthase subunit alpha (512 aa).

169–176 (GDRQTGKT) provides a ligand contact to ATP.

This sequence belongs to the ATPase alpha/beta chains family. In terms of assembly, F-type ATPases have 2 components, CF(1) - the catalytic core - and CF(0) - the membrane proton channel. CF(1) has five subunits: alpha(3), beta(3), gamma(1), delta(1), epsilon(1). CF(0) has three main subunits: a(1), b(2) and c(9-12). The alpha and beta chains form an alternating ring which encloses part of the gamma chain. CF(1) is attached to CF(0) by a central stalk formed by the gamma and epsilon chains, while a peripheral stalk is formed by the delta and b chains.

It is found in the cell inner membrane. The catalysed reaction is ATP + H2O + 4 H(+)(in) = ADP + phosphate + 5 H(+)(out). Functionally, produces ATP from ADP in the presence of a proton gradient across the membrane. The alpha chain is a regulatory subunit. The polypeptide is ATP synthase subunit alpha (Orientia tsutsugamushi (strain Ikeda) (Rickettsia tsutsugamushi)).